The sequence spans 533 residues: Glycogen synthase (533 aa).

Residue Lys12 coordinates ADP-alpha-D-glucose. Positions 497 to 533 (AALARADAASGRRRRAPEQSERLRQERLARQVALASK) are disordered. The span at 512-525 (APEQSERLRQERLA) shows a compositional bias: basic and acidic residues.

Belongs to the glycosyltransferase 1 family. Bacterial/plant glycogen synthase subfamily.

The catalysed reaction is [(1-&gt;4)-alpha-D-glucosyl](n) + ADP-alpha-D-glucose = [(1-&gt;4)-alpha-D-glucosyl](n+1) + ADP + H(+). Its pathway is glycan biosynthesis; glycogen biosynthesis. Synthesizes alpha-1,4-glucan chains using ADP-glucose. The sequence is that of Glycogen synthase from Burkholderia thailandensis (strain ATCC 700388 / DSM 13276 / CCUG 48851 / CIP 106301 / E264).